Here is a 277-residue protein sequence, read N- to C-terminus: MELLHSGKVRDVYADGDDLILVASDRVSVYDVVLPTPIPEKGKLLTALSLWWFDQLAELVPNHVLSATDVPVELAGRAIRCRRLEMVPVECVARGYLVGGGFAEYQRTGVVSGIELPRGMVEAAALPEPIFTPSTKAPVGEHDQPMTFGEVVDKVGAETAERLRQITLDVYRRGAELAADRGILIADTKIELGWAADGTLTVGDELLTSDSSRFWPAESYQPGRAQFSYDKQYVRDWATRSGWDRRSPAPEVPDEVVDATRARYVDVYERLTGERWG.

The protein belongs to the SAICAR synthetase family.

The catalysed reaction is 5-amino-1-(5-phospho-D-ribosyl)imidazole-4-carboxylate + L-aspartate + ATP = (2S)-2-[5-amino-1-(5-phospho-beta-D-ribosyl)imidazole-4-carboxamido]succinate + ADP + phosphate + 2 H(+). Its pathway is purine metabolism; IMP biosynthesis via de novo pathway; 5-amino-1-(5-phospho-D-ribosyl)imidazole-4-carboxamide from 5-amino-1-(5-phospho-D-ribosyl)imidazole-4-carboxylate: step 1/2. The sequence is that of Phosphoribosylaminoimidazole-succinocarboxamide synthase from Salinispora tropica (strain ATCC BAA-916 / DSM 44818 / JCM 13857 / NBRC 105044 / CNB-440).